The following is a 195-amino-acid chain: Imidazoleglycerol-phosphate dehydratase (195 aa).

Belongs to the imidazoleglycerol-phosphate dehydratase family.

Its subcellular location is the cytoplasm. The enzyme catalyses D-erythro-1-(imidazol-4-yl)glycerol 3-phosphate = 3-(imidazol-4-yl)-2-oxopropyl phosphate + H2O. It participates in amino-acid biosynthesis; L-histidine biosynthesis; L-histidine from 5-phospho-alpha-D-ribose 1-diphosphate: step 6/9. The chain is Imidazoleglycerol-phosphate dehydratase from Aminomonas aminovorus.